Reading from the N-terminus, the 828-residue chain is Glycerol-3-phosphate acyltransferase (828 aa).

The short motif at 309–314 is the HXXXXD motif element; the sequence is CHRSHI.

The protein belongs to the GPAT/DAPAT family.

The protein resides in the cell inner membrane. It carries out the reaction sn-glycerol 3-phosphate + an acyl-CoA = a 1-acyl-sn-glycero-3-phosphate + CoA. It participates in phospholipid metabolism; CDP-diacylglycerol biosynthesis; CDP-diacylglycerol from sn-glycerol 3-phosphate: step 1/3. The chain is Glycerol-3-phosphate acyltransferase from Pseudomonas putida (strain W619).